A 372-amino-acid chain; its full sequence is N-methyl-L-tryptophan oxidase (372 aa).

An FAD-binding site is contributed by 4–34 (DLIIIGSGSVGAAAGYYATRAGLKVLMTDAH). S-8alpha-FAD cysteine is present on cysteine 307.

This sequence belongs to the MSOX/MTOX family. MTOX subfamily. Monomer. FAD serves as cofactor.

The enzyme catalyses N(alpha)-methyl-L-tryptophan + O2 + H2O = L-tryptophan + formaldehyde + H2O2. In terms of biological role, catalyzes the oxidative demethylation of N-methyl-L-tryptophan. In Salmonella agona (strain SL483), this protein is N-methyl-L-tryptophan oxidase.